A 355-amino-acid polypeptide reads, in one-letter code: Tetraspanin-10 (355 aa).

The interval 1–33 (MEEGERSPLLSQETAGQKPLSVHRPPTSGCLGP) is disordered. Residues 1 to 78 (MEEGERSPLL…LSPGSSCVKY (78 aa)) lie on the Cytoplasmic side of the membrane. The helical transmembrane segment at 79 to 99 (LIFLSNFPFSLLGLLALAIGL) threads the bilayer. Over 100–120 (WGLAVKGSLGSDLGGPLPTDP) the chain is Extracellular. Residues 121-141 (MLGLALGGLVVSAASLAGCLG) traverse the membrane as a helical segment. Residues 142 to 154 (ALCENTCLLRGFS) are Cytoplasmic-facing. Residues 155-175 (GGILAFLVLEAVAGALVVALW) traverse the membrane as a helical segment. The Extracellular portion of the chain corresponds to 176 to 355 (GPLQDSLEHT…APPAAKPARG (180 aa)). Intrachain disulfides connect Cys212/Cys279, Cys213/Cys243, Cys229/Cys237, and Cys244/Cys258. Residue Asn228 is glycosylated (N-linked (GlcNAc...) asparagine). The interval 327-355 (YGPGAHGEDRAGPQSPSPGAPPAAKPARG) is disordered. A compositionally biased stretch (pro residues) spans 341-355 (SPSPGAPPAAKPARG).

Belongs to the tetraspanin (TM4SF) family. As to quaternary structure, interacts with ADAM10. As to expression, expressed in the eye, including iris, ciliary body, retinal pigment epithelium, but not lens (protein level).

It is found in the cell membrane. Part of TspanC8 subgroup, composed of 6 members that interact with the transmembrane metalloprotease ADAM10. This interaction is required for ADAM10 exit from the endoplasmic reticulum and for enzymatic maturation and trafficking to the cell surface as well as substrate specificity. Different TspanC8/ADAM10 complexes have distinct substrates. The protein is Tetraspanin-10 of Homo sapiens (Human).